We begin with the raw amino-acid sequence, 252 residues long: Protein TRANSPARENT TESTA 16 (252 aa).

One can recognise an MADS-box domain in the interval 1-61 (MGRGKIEIKK…GKLSEFCSEQ (61 aa)). A K-box domain is found at 86–176 (QEQLHHEMEL…YRWLHEHRAA (91 aa)). Residues 121 to 174 (NELDGLERQLEHSVLKVRERKNELMQQQLENLSRKRRMLEEDNNNMYRWLHEHR) are a coiled coil.

Interacts with AP1/AGL7, SEP1/AGL2, SEP2/AGL4, SEP3/AGL9 and AGL3/SEP4. As to expression, expressed in buds, flowers and immature seeds, but not in roots, stems, leaves, seedlings or siliques valves. Expression in seed coat is confined to the endothelium layer.

It is found in the nucleus. Transcription factor involved in the developmental regulation of the endothelium and in the accumulation of proanthocyanidins (PAs) or condensed tannins which give the seed its brown pigmentation after oxidation. Necessary for the normal activation of the BANYULS promoter in the endothelium body. Is required, together with AGL11/STK for the maternal control of endothelium formation, which is essential for female gametophyte development and fertilization, and seed formation. Interacts genetically with AGL1/SHP1 and AGL5/SHP2 in a partially antagonistic manner and represses AGL1/SHP1, AGL5/SHP2, and AGL8/FUL during flower development. Is essential for the coordination of cell divisions in ovule, seed coat development and endosperm formation. Mediates the crosstalk between endothelium and nucellus to ensure proper seed formation. Functions redundantly with AGL63/GOA to repress nucellus growth and promote its degeneration. Represses the negative regulator of autophagy and programmed cell death HVA22D in the proximal nucellus. Binds specifically to the CArG box DNA sequence 5'-CC (A/T)6 GG-3'. This is Protein TRANSPARENT TESTA 16 (TT16) from Arabidopsis thaliana (Mouse-ear cress).